A 309-amino-acid chain; its full sequence is D-alanine--D-alanine ligase (309 aa).

The 200-residue stretch at 106 to 305 folds into the ATP-grasp domain; it reads KMLWKAFGLP…FEQLVVKILE (200 aa). 136 to 191 is an ATP binding site; the sequence is VEKLGLPVMVKPSLEGSSVGLTKVKRVEDLKSAVDFALKYDDTVLIEEWLSGAEFT. Mg(2+) contacts are provided by Asp259, Glu272, and Asn274.

The protein belongs to the D-alanine--D-alanine ligase family. Mg(2+) serves as cofactor. It depends on Mn(2+) as a cofactor.

It is found in the cytoplasm. The catalysed reaction is 2 D-alanine + ATP = D-alanyl-D-alanine + ADP + phosphate + H(+). Its pathway is cell wall biogenesis; peptidoglycan biosynthesis. Its function is as follows. Cell wall formation. This Pasteurella multocida (strain Pm70) protein is D-alanine--D-alanine ligase.